Consider the following 179-residue polypeptide: Interferon lambda-4 (179 aa).

An N-terminal signal peptide occupies residues 1 to 21; the sequence is MRPSVWAAVAAGLWVLCTVIA. The tract at residues 130 to 149 is disordered; the sequence is SSRKVPGAQKRRHKPRRADS.

It belongs to the lambda interferon family.

Its subcellular location is the cytoplasm. It is found in the secreted. Functionally, cytokine that may trigger an antiviral response activating the JAK-STAT pathway and up-regulating specifically some interferon-stimulated genes. This chain is Interferon lambda-4 (IFNL4), found in Homo sapiens (Human).